The following is a 712-amino-acid chain: Polyribonucleotide nucleotidyltransferase (712 aa).

Mg(2+)-binding residues include Asp-493 and Asp-499. The KH domain maps to 560 to 619 (PRLLTFKVDPEDIGKIIGPGGKTVRGITEATGAKVDISDDGTITVSSSVGGQAEAARAMI). The 69-residue stretch at 629-697 (GQVYLGKVTR…HKGRINLTRL (69 aa)) folds into the S1 motif domain.

This sequence belongs to the polyribonucleotide nucleotidyltransferase family. Requires Mg(2+) as cofactor.

It is found in the cytoplasm. It catalyses the reaction RNA(n+1) + phosphate = RNA(n) + a ribonucleoside 5'-diphosphate. Functionally, involved in mRNA degradation. Catalyzes the phosphorolysis of single-stranded polyribonucleotides processively in the 3'- to 5'-direction. The sequence is that of Polyribonucleotide nucleotidyltransferase from Synechococcus sp. (strain JA-2-3B'a(2-13)) (Cyanobacteria bacterium Yellowstone B-Prime).